The chain runs to 212 residues: Thymidylate kinase (212 aa).

10–17 (GLEGAGKT) is an ATP binding site.

It belongs to the thymidylate kinase family.

It catalyses the reaction dTMP + ATP = dTDP + ADP. Functionally, phosphorylation of dTMP to form dTDP in both de novo and salvage pathways of dTTP synthesis. This is Thymidylate kinase from Yersinia pseudotuberculosis serotype O:3 (strain YPIII).